Consider the following 296-residue polypeptide: Ribosomal RNA small subunit methyltransferase H (296 aa).

Residues 38–40 (GVH), glutamate 57, phenylalanine 80, aspartate 103, and histidine 110 contribute to the S-adenosyl-L-methionine site.

It belongs to the methyltransferase superfamily. RsmH family.

The protein localises to the cytoplasm. It carries out the reaction cytidine(1402) in 16S rRNA + S-adenosyl-L-methionine = N(4)-methylcytidine(1402) in 16S rRNA + S-adenosyl-L-homocysteine + H(+). Its function is as follows. Specifically methylates the N4 position of cytidine in position 1402 (C1402) of 16S rRNA. In Borreliella burgdorferi (strain ATCC 35210 / DSM 4680 / CIP 102532 / B31) (Borrelia burgdorferi), this protein is Ribosomal RNA small subunit methyltransferase H.